A 486-amino-acid polypeptide reads, in one-letter code: Glucose-6-phosphate 1-dehydrogenase (486 aa).

Residues 13–20 (GGTGDLAK), R47, 86–87 (DV), and K149 contribute to the NADP(+) site. The substrate site is built by H179, K183, E217, and D236. Catalysis depends on H241, which acts as the Proton acceptor. Residues K339 and K344 each coordinate substrate.

It belongs to the glucose-6-phosphate dehydrogenase family. As to quaternary structure, homodimer.

The enzyme catalyses D-glucose 6-phosphate + NAD(+) = 6-phospho-D-glucono-1,5-lactone + NADH + H(+). It carries out the reaction D-glucose 6-phosphate + NADP(+) = 6-phospho-D-glucono-1,5-lactone + NADPH + H(+). It functions in the pathway carbohydrate degradation; pentose phosphate pathway; D-ribulose 5-phosphate from D-glucose 6-phosphate (oxidative stage): step 1/3. Its function is as follows. Catalyzes the oxidation of glucose 6-phosphate to 6-phosphogluconolactone. Can utilize either NADP(+) or NAD(+). The protein is Glucose-6-phosphate 1-dehydrogenase of Leuconostoc mesenteroides.